The sequence spans 60 residues: Large ribosomal subunit protein bL32 (60 aa).

The tract at residues 1–22 is disordered; it reads MAVPARHTSKAKKNKRRTHYKL. A compositionally biased stretch (basic residues) spans 7 to 20; it reads HTSKAKKNKRRTHY.

This sequence belongs to the bacterial ribosomal protein bL32 family.

The protein is Large ribosomal subunit protein bL32 of Streptococcus pyogenes serotype M3 (strain ATCC BAA-595 / MGAS315).